Reading from the N-terminus, the 116-residue chain is Large ribosomal subunit protein bL20c (116 aa).

The protein belongs to the bacterial ribosomal protein bL20 family.

It localises to the plastid. It is found in the chloroplast. Its function is as follows. Binds directly to 23S ribosomal RNA and is necessary for the in vitro assembly process of the 50S ribosomal subunit. It is not involved in the protein synthesizing functions of that subunit. This Marchantia polymorpha (Common liverwort) protein is Large ribosomal subunit protein bL20c (rpl20).